Consider the following 68-residue polypeptide: Peptide Hp1412 (68 aa).

Residues 1 to 23 form the signal peptide; the sequence is MKTHFAIFLITLFLFQMFSQSDA. The residue at position 36 (C36) is a Cysteine amide. A propeptide spanning residues 40-68 is cleaved from the precursor; the sequence is GLSDLYDLDEMFDGEISQADIDFLKELMR.

Belongs to the non-disulfide-bridged peptide (NDBP) superfamily. Short antimicrobial peptide (group 4) family. Expressed by the venom gland.

Its subcellular location is the secreted. The protein resides in the target cell membrane. Amphipathic peptide with antimicrobial activity. The chain is Peptide Hp1412 from Heterometrus petersii (Asian forest scorpion).